The primary structure comprises 308 residues: HTH-type transcriptional regulator YtlI (308 aa).

The region spanning 1-57 (MELRSIKTFHTIVKFGSFYKAAEILNYSQPTISMRMKQLEQDLGVLLFERGKSLQLT) is the HTH lysR-type domain. Positions 18–37 (FYKAAEILNYSQPTISMRMK) form a DNA-binding region, H-T-H motif.

This sequence belongs to the LysR transcriptional regulatory family.

Its function is as follows. Positively regulates the expression of ytmI operon in response to the availability of sulfur sources. This chain is HTH-type transcriptional regulator YtlI (ytlI), found in Bacillus subtilis (strain 168).